Consider the following 224-residue polypeptide: Deoxyribose-phosphate aldolase (224 aa).

Asp93 (proton donor/acceptor) is an active-site residue. Lys159 (schiff-base intermediate with acetaldehyde) is an active-site residue. Catalysis depends on Lys189, which acts as the Proton donor/acceptor.

It belongs to the DeoC/FbaB aldolase family. DeoC type 1 subfamily.

It localises to the cytoplasm. The catalysed reaction is 2-deoxy-D-ribose 5-phosphate = D-glyceraldehyde 3-phosphate + acetaldehyde. Its pathway is carbohydrate degradation; 2-deoxy-D-ribose 1-phosphate degradation; D-glyceraldehyde 3-phosphate and acetaldehyde from 2-deoxy-alpha-D-ribose 1-phosphate: step 2/2. Its function is as follows. Catalyzes a reversible aldol reaction between acetaldehyde and D-glyceraldehyde 3-phosphate to generate 2-deoxy-D-ribose 5-phosphate. The chain is Deoxyribose-phosphate aldolase from Mycobacterium bovis (strain ATCC BAA-935 / AF2122/97).